The following is a 262-amino-acid chain: (2Z,6E)-farnesyl diphosphate synthase (262 aa).

Aspartate 40 is an active-site residue. Aspartate 40 is a Mg(2+) binding site. Residues glycine 41–arginine 44, tryptophan 45, and serine 86–glutamate 88 contribute to the substrate site. Asparagine 89 (proton acceptor) is an active-site residue. Substrate is bound by residues arginine 92, arginine 211, and arginine 217–serine 219. Glutamate 230 is a binding site for Mg(2+).

Belongs to the UPP synthase family. Z-FPP synthase subfamily. In terms of assembly, homodimer. Requires Mg(2+) as cofactor.

It localises to the cytoplasm. The protein resides in the cell membrane. It catalyses the reaction isopentenyl diphosphate + (2E)-geranyl diphosphate = (2Z,6E)-farnesyl diphosphate + diphosphate. Functionally, catalyzes the condensation of only one isopentenyl pyrophosphate (IPP) unit in the cis configuration to E-geranyl diphosphate (E-GPP) generating the 15 carbon product (2Z,6E)-farnesyl diphosphate (Z-FPP or EZ-FPP). Z-FPP is the precursor of decaprenyl diphosphate, which has a central role in the biosynthesis of the mycobacterial cell wall. This chain is (2Z,6E)-farnesyl diphosphate synthase, found in Mycobacterium tuberculosis (strain CDC 1551 / Oshkosh).